Reading from the N-terminus, the 330-residue chain is Probable inactive heme oxygenase 2, chloroplastic (330 aa).

Low complexity-rich tracts occupy residues 1-13 (MPLA…SAVV) and 56-69 (AAEA…VDEA). 3 disordered regions span residues 1–27 (MPLA…RARP), 50–82 (PSPP…YPRQ), and 107–156 (TTLK…LEGE). The transit peptide at 1-47 (MPLAAAVAASAVVPPRPPPPPPRRARPLRSFTGLILTRDLAALTVAR) directs the protein to the chloroplast. Residues 114–151 (TGAEEEVGDGVSEDASASEEEEEEEDDDDVVEEEEEGA) are compositionally biased toward acidic residues.

Belongs to the heme oxygenase family.

The protein localises to the plastid. Its subcellular location is the chloroplast. In terms of biological role, probable inactive heme oxygenase that may play a role in the regulation of phytochrome assembly and photomorphogenesis. The protein is Probable inactive heme oxygenase 2, chloroplastic (HO2) of Oryza sativa subsp. japonica (Rice).